A 299-amino-acid chain; its full sequence is tRNA-cytidine(32) 2-sulfurtransferase (299 aa).

Residues 56–61 (SGGKDS) carry the PP-loop motif motif. [4Fe-4S] cluster contacts are provided by Cys-131, Cys-134, and Cys-222.

Belongs to the TtcA family. In terms of assembly, homodimer. Requires Mg(2+) as cofactor. It depends on [4Fe-4S] cluster as a cofactor.

The protein resides in the cytoplasm. It catalyses the reaction cytidine(32) in tRNA + S-sulfanyl-L-cysteinyl-[cysteine desulfurase] + AH2 + ATP = 2-thiocytidine(32) in tRNA + L-cysteinyl-[cysteine desulfurase] + A + AMP + diphosphate + H(+). Its pathway is tRNA modification. In terms of biological role, catalyzes the ATP-dependent 2-thiolation of cytidine in position 32 of tRNA, to form 2-thiocytidine (s(2)C32). The sulfur atoms are provided by the cysteine/cysteine desulfurase (IscS) system. This is tRNA-cytidine(32) 2-sulfurtransferase from Xylella fastidiosa (strain M12).